The primary structure comprises 122 residues: Basic phospholipase A2 homolog ecarpholin S (122 aa).

Disulfide bonds link Cys26-Cys115, Cys28-Cys44, Cys43-Cys95, Cys49-Cys122, Cys50-Cys88, Cys57-Cys81, and Cys75-Cys86. The important for membrane-damaging activities in eukaryotes and bacteria; heparin-binding stretch occupies residues 105–117 (KKYTYYPNFWCKG).

In terms of tissue distribution, expressed by the venom gland.

The protein resides in the secreted. Suramin inhibits the myotoxic activity. In terms of biological role, snake venom phospholipase A2 homolog that lacks enzymatic activity. Shows high myotoxin activities and displays edema-inducing activities. This Echis carinatus (Saw-scaled viper) protein is Basic phospholipase A2 homolog ecarpholin S.